Here is a 267-residue protein sequence, read N- to C-terminus: MTKTKIMGILNVTPDSFSDGGKFNNVESAVTRVKAMMDEGADIIDVGGVSTRPGHEMITVEEELNRVLPVVEAIVGFDVKISVDTFRSEVAEACLKLGVDIINDQWAGLYDHRMFQVVAKYDAEIVLMHNGNGNRDEPVVEEMLTSLLAQAHQAKIAGIPSNKIWLDPGIGFAKTRNEEAEVMARLDELVATEYPVLLATSRKRFTKEMMGYDTTPVERDEVTAATTAYGIMKGVRAVRVHNVELNAKLAKGIDFLKENENARHNFS.

The Pterin-binding domain maps to 1–251 (MTKTKIMGIL…NVELNAKLAK (251 aa)). N11 is a Mg(2+) binding site. Residues T51, D84, N103, D167, K203, and 239–241 (RVH) each bind (7,8-dihydropterin-6-yl)methyl diphosphate.

It belongs to the DHPS family. In terms of assembly, homodimer. Mg(2+) is required as a cofactor.

The enzyme catalyses (7,8-dihydropterin-6-yl)methyl diphosphate + 4-aminobenzoate = 7,8-dihydropteroate + diphosphate. It functions in the pathway cofactor biosynthesis; tetrahydrofolate biosynthesis; 7,8-dihydrofolate from 2-amino-4-hydroxy-6-hydroxymethyl-7,8-dihydropteridine diphosphate and 4-aminobenzoate: step 1/2. Catalyzes the condensation of para-aminobenzoate (pABA) with 6-hydroxymethyl-7,8-dihydropterin diphosphate (DHPt-PP) to form 7,8-dihydropteroate (H2Pte), the immediate precursor of folate derivatives. In Staphylococcus aureus (strain MRSA252), this protein is Dihydropteroate synthase (folP).